Consider the following 611-residue polypeptide: L-tyrosine decarboxylase (611 aa).

Pyridoxal 5'-phosphate contacts are provided by residues 151–152, threonine 292, and 382–384; these read GS and DPH. Residue lysine 385 is modified to N6-(pyridoxal phosphate)lysine. Tyrosine 413 serves as the catalytic Proton donor. Position 433 (serine 433) interacts with pyridoxal 5'-phosphate.

The protein belongs to the group II decarboxylase family. Tyrosine decarboxylase subfamily. As to quaternary structure, homodimer. Pyridoxal 5'-phosphate serves as cofactor.

It carries out the reaction L-tyrosine + H(+) = tyramine + CO2. It catalyses the reaction L-dopa + H(+) = dopamine + CO2. It functions in the pathway amino-acid metabolism. Levodopa decarboxylation is not inhibited by carbidopa, benserazide, and methyldopa, that are three human L-dopa decarboxylase inhibitors. Its function is as follows. Catalyzes the decarboxylation of L-tyrosine to produce tyramine. Plays a role in acid resistance since tyramine production via tyrosine decarboxylation appears to provide a cytosolic pH maintenance mechanism that helps the bacterium cope with acid stress such as that encountered in gastrointestinal tract (GIT) environments. Therefore, may contribute to the colonization of the human GIT by E.faecium. In terms of biological role, also involved in drug metabolism, being able to catalyze decarboxylation of levodopa (L-dopa) to dopamine. In gut microbiota this enzyme is in fact exclusively responsible for the decarboxylation of levodopa, and thus reduces in situ levels of levodopa in the treatment of Parkinson's disease. It was shown that abundance of bacterial tyrosine decarboxylase in the proximal small intestine - the primary site of levodopa absorption - contributes to interindividual variation in drug efficacy and can explain the requirement for an increased dosage regimen of levodopa treatment in Parkinson's disease patients. The protein is L-tyrosine decarboxylase of Enterococcus faecium (Streptococcus faecium).